The primary structure comprises 156 residues: MSTELTVQSERAFQKQPHIFNNPKVKTSKRTKRWYKNAGLGFKTPKTAIEGSYIDKKCPFTGLVSIRGKILTGTVVSTKMHRTIVIRRAYLHYIPKYNRYEKRHKNVPVHVSPAFRVQVGDIVTVGQCRPISKTVRFNVVKVSAAAGKANKQFAKF.

S2 bears the N-acetylserine mark. Residues K15, K46, K56, K57, K79, K96, K105, K133, K141, and K148 each participate in a glycyl lysine isopeptide (Lys-Gly) (interchain with G-Cter in ubiquitin) cross-link.

This sequence belongs to the universal ribosomal protein uS17 family. In terms of assembly, component of the small ribosomal subunit (SSU). Mature yeast ribosomes consist of a small (40S) and a large (60S) subunit. The 40S small subunit contains 1 molecule of ribosomal RNA (18S rRNA) and 33 different proteins (encoded by 57 genes). The large 60S subunit contains 3 rRNA molecules (25S, 5.8S and 5S rRNA) and 46 different proteins (encoded by 81 genes). Post-translationally, N-terminally acetylated by acetyltransferase NatA.

The protein localises to the cytoplasm. Functionally, component of the ribosome, a large ribonucleoprotein complex responsible for the synthesis of proteins in the cell. The small ribosomal subunit (SSU) binds messenger RNAs (mRNAs) and translates the encoded message by selecting cognate aminoacyl-transfer RNA (tRNA) molecules. The large subunit (LSU) contains the ribosomal catalytic site termed the peptidyl transferase center (PTC), which catalyzes the formation of peptide bonds, thereby polymerizing the amino acids delivered by tRNAs into a polypeptide chain. The nascent polypeptides leave the ribosome through a tunnel in the LSU and interact with protein factors that function in enzymatic processing, targeting, and the membrane insertion of nascent chains at the exit of the ribosomal tunnel. This chain is Small ribosomal subunit protein uS17A, found in Saccharomyces cerevisiae (strain ATCC 204508 / S288c) (Baker's yeast).